Reading from the N-terminus, the 277-residue chain is Undecaprenyl-diphosphatase (277 aa).

The next 6 helical transmembrane spans lie at 47-67, 85-105, 108-128, 183-203, 218-238, and 249-269; these read FNII…RGKI, VNLL…ADLI, WLFN…IMLW, AATE…AVYS, VFAV…RALL, and FAWY…FHLI.

The protein belongs to the UppP family.

The protein localises to the cell inner membrane. The catalysed reaction is di-trans,octa-cis-undecaprenyl diphosphate + H2O = di-trans,octa-cis-undecaprenyl phosphate + phosphate + H(+). Its function is as follows. Catalyzes the dephosphorylation of undecaprenyl diphosphate (UPP). Confers resistance to bacitracin. The sequence is that of Undecaprenyl-diphosphatase from Pseudomonas paraeruginosa (strain DSM 24068 / PA7) (Pseudomonas aeruginosa (strain PA7)).